The following is an 87-amino-acid chain: MASLSHILVLWVGILTVVNAEAPQEHDPFTYDYQSLRIGGLIIAGILFILGILIVLSRRCRCKFNQQQSLGKMRSPHLAAQFSSESC.

A signal peptide spans 1–20 (MASLSHILVLWVGILTVVNA). Residues 21 to 35 (EAPQEHDPFTYDYQS) are Extracellular-facing. A helical membrane pass occupies residues 36–56 (LRIGGLIIAGILFILGILIVL). Residues 57-87 (SRRCRCKFNQQQSLGKMRSPHLAAQFSSESC) are Cytoplasmic-facing. Cys-60 is lipidated: S-palmitoyl cysteine. Position 62 is an S-glutathionyl cysteine; alternate (Cys-62). A lipid anchor (S-palmitoyl cysteine; alternate) is attached at Cys-62. Position 75 is a phosphoserine; by PKA and PKC (Ser-75). Ser-83 is subject to Phosphoserine; by PKA.

Belongs to the FXYD family. As to quaternary structure, homotetramer. Monomer. Regulatory subunit of the sodium/potassium-transporting ATPase (NKA) which is composed of a catalytic alpha subunit, a non-catalytic beta subunit and an additional regulatory subunit. The monomeric form associates with NKA while the oligomeric form does not. Interacts with the catalytic alpha-1 subunit ATP1A1. Also interacts with the catalytic alpha-2 and alpha-3 subunits ATP1A2 and ATP1A3. Very little interaction with ATP1A1, ATP1A2 or ATP1A3 when phosphorylated at Ser-83. Interacts with the non-catalytic beta-1 subunit ATP1B1. Oxidative stress decreases interaction with ATP1A1 but increases interaction with ATP1B1. Major plasma membrane substrate for cAMP-dependent protein kinase (PKA) and protein kinase C (PKC) in several different tissues. Phosphorylated in response to insulin and adrenergic stimulation. Phosphorylation at Ser-83 stimulates sodium/potassium-transporting ATPase activity while the unphosphorylated form inhibits sodium/potassium-transporting ATPase activity. Phosphorylation increases tetramerization, decreases binding to ATP1A1 and reduces inhibition of ATP1A1 activity. Phosphorylation at Ser-75 leads to greatly reduced interaction with ATP1A1, ATP1A2 and ATP1A3. May be phosphorylated by DMPK. Post-translationally, palmitoylation increases half-life and stability and is enhanced upon phosphorylation at Ser-83 by PKA.

The protein resides in the cell membrane. It localises to the sarcolemma. Its subcellular location is the apical cell membrane. The protein localises to the membrane. It is found in the caveola. The protein resides in the T-tubule. In terms of biological role, associates with and regulates the activity of the sodium/potassium-transporting ATPase (NKA) which transports Na(+) out of the cell and K(+) into the cell. Inhibits NKA activity in its unphosphorylated state and stimulates activity when phosphorylated. Reduces glutathionylation of the NKA beta-1 subunit ATP1B1, thus reversing glutathionylation-mediated inhibition of ATP1B1. Contributes to female sexual development by maintaining the excitability of neurons which secrete gonadotropin-releasing hormone. This Sus scrofa (Pig) protein is Phospholemman.